A 359-amino-acid polypeptide reads, in one-letter code: 24-methylenesterol C-methyltransferase 3 (359 aa).

A helical transmembrane segment spans residues 4 to 24 (VALYCTAGLIAGAVYWFICVL).

It belongs to the class I-like SAM-binding methyltransferase superfamily. Erg6/SMT family.

Its subcellular location is the membrane. It catalyses the reaction 24-methylidenelophenol + S-adenosyl-L-methionine = (Z)-24-ethylidenelophenol + S-adenosyl-L-homocysteine + H(+). It participates in steroid biosynthesis; sterol biosynthesis. In terms of biological role, catalyzes the methyl transfer from S-adenosyl-methionine to the methylene group of 24-methylene lophenol to form 24-ethylidene lophenol. The protein is 24-methylenesterol C-methyltransferase 3 (SMT3) of Arabidopsis thaliana (Mouse-ear cress).